Reading from the N-terminus, the 412-residue chain is Probable serine/threonine-protein kinase PBL4 (412 aa).

Gly2 carries N-myristoyl glycine lipidation. Cys4 carries S-palmitoyl cysteine lipidation. The tract at residues 14–40 is disordered; the sequence is RESPYRGSSRISAKRSQSSRLSSLTIQ. A compositionally biased stretch (low complexity) spans 21-40; it reads SSRISAKRSQSSRLSSLTIQ. Thr72 bears the Phosphothreonine mark. The Protein kinase domain maps to 83-369; it reads FRPDSVIGEG…STLEELEMTL (287 aa). ATP is bound by residues 89–97 and Lys121; that span reads IGEGGFGYV. Tyr167 bears the Phosphotyrosine mark. Asp215 (proton acceptor) is an active-site residue. Phosphoserine occurs at positions 219 and 249. Residues Thr250 and Thr255 each carry the phosphothreonine modification. The residue at position 263 (Tyr263) is a Phosphotyrosine.

It belongs to the protein kinase superfamily. Ser/Thr protein kinase family.

It localises to the cell membrane. It carries out the reaction L-seryl-[protein] + ATP = O-phospho-L-seryl-[protein] + ADP + H(+). The catalysed reaction is L-threonyl-[protein] + ATP = O-phospho-L-threonyl-[protein] + ADP + H(+). In terms of biological role, may be involved in plant defense signaling. The sequence is that of Probable serine/threonine-protein kinase PBL4 from Arabidopsis thaliana (Mouse-ear cress).